Here is a 465-residue protein sequence, read N- to C-terminus: MFRQEQPLAEGSFAPMGSLQPDAGNSSWNGTEAPGGGTRATPYSLQVTLTLVCLAGLLMLFTVFGNVLVIIAVFTSRALKAPQNLFLVSLASADILVATLVIPFSLANEVMGYWYFGKVWCEIYLALDVLFCTSSIVHLCAISLDRYWSITQAIEYNLKRTPRRIKAIIVTVWVISAVISFPPLISIEKKGAGGGQQPAEPSCKINDQKWYVISSSIGSFFAPCLIMILVYVRIYQIAKRRTRVPPSRRGPDACSAPPGGADRRPNGLGPERGAGTAGAEAEPLPTQLNGAPGEPAPTRPRDGDALDLEESSSSEHAERPQGPGKPERGPRAKGKTKASQVKPGDSLPRRGPGAAGPGASGSGQGEERAGGAKASRWRGRQNREKRFTFVLAVVIGVFVVCWFPFFFTYTLIAVGCPVPYQLFNFFFWFGYCNSSLNPVIYTIFNHDFRRAFKKILCRGDRKRIV.

Residues 1–48 (MFRQEQPLAEGSFAPMGSLQPDAGNSSWNGTEAPGGGTRATPYSLQVT) lie on the Extracellular side of the membrane. N-linked (GlcNAc...) asparagine glycans are attached at residues Asn-25 and Asn-29. The helical transmembrane segment at 49–74 (LTLVCLAGLLMLFTVFGNVLVIIAVF) threads the bilayer. Residues 75–85 (TSRALKAPQNL) are Cytoplasmic-facing. Residues 86–111 (FLVSLASADILVATLVIPFSLANEVM) traverse the membrane as a helical segment. Topologically, residues 112–121 (GYWYFGKVWC) are extracellular. A disulfide bridge links Cys-121 with Cys-203. Residues 122–144 (EIYLALDVLFCTSSIVHLCAISL) traverse the membrane as a helical segment. Residues 145 to 164 (DRYWSITQAIEYNLKRTPRR) lie on the Cytoplasmic side of the membrane. Residues 165–188 (IKAIIVTVWVISAVISFPPLISIE) form a helical membrane-spanning segment. Residues 189–207 (KKGAGGGQQPAEPSCKIND) are Extracellular-facing. A helical membrane pass occupies residues 208–232 (QKWYVISSSIGSFFAPCLIMILVYV). At 233 to 389 (RIYQIAKRRT…RQNREKRFTF (157 aa)) the chain is on the cytoplasmic side. A disordered region spans residues 242–377 (TRVPPSRRGP…RAGGAKASRW (136 aa)). The segment covering 313–330 (SSEHAERPQGPGKPERGP) has biased composition (basic and acidic residues). A Phosphoserine modification is found at Ser-346. The span at 353 to 364 (GAAGPGASGSGQ) shows a compositional bias: gly residues. Arg-368 is subject to Omega-N-methylarginine. Residues 390-414 (VLAVVIGVFVVCWFPFFFTYTLIAV) traverse the membrane as a helical segment. Over 415 to 424 (GCPVPYQLFN) the chain is Extracellular. The helical transmembrane segment at 425–445 (FFFWFGYCNSSLNPVIYTIFN) threads the bilayer. Topologically, residues 446–465 (HDFRRAFKKILCRGDRKRIV) are cytoplasmic. Residue Cys-457 is the site of S-palmitoyl cysteine attachment.

It belongs to the G-protein coupled receptor 1 family. Adrenergic receptor subfamily. ADRA2A sub-subfamily. As to expression, expressed in brain.

Its subcellular location is the cell membrane. Functionally, alpha-2 adrenergic receptors mediate the catecholamine-induced inhibition of adenylate cyclase through the action of G proteins. The chain is Alpha-2A adrenergic receptor from Rattus norvegicus (Rat).